Reading from the N-terminus, the 408-residue chain is DNA-directed RNA polymerase subunit Rpo1C (408 aa).

This sequence belongs to the RNA polymerase beta' chain family. Part of the RNA polymerase complex.

Its subcellular location is the cytoplasm. The enzyme catalyses RNA(n) + a ribonucleoside 5'-triphosphate = RNA(n+1) + diphosphate. Its function is as follows. DNA-dependent RNA polymerase (RNAP) catalyzes the transcription of DNA into RNA using the four ribonucleoside triphosphates as substrates. Forms part of the jaw domain. This chain is DNA-directed RNA polymerase subunit Rpo1C, found in Methanosarcina mazei (strain ATCC BAA-159 / DSM 3647 / Goe1 / Go1 / JCM 11833 / OCM 88) (Methanosarcina frisia).